Reading from the N-terminus, the 1018-residue chain is Calcium-transporting ATPase sarcoplasmic/endoplasmic reticulum type (1018 aa).

Topologically, residues 1 to 48 (MEDGHSKTVDEVLSHFRVDPERGLSLDQVKEYQKKYGPNELPAEEGKT) are cytoplasmic. The chain crosses the membrane as a helical span at residues 49 to 69 (LWQLVLEQFDDLLVKILLLAA). Topologically, residues 70–88 (IISFVLALFEEHEGVEAFV) are lumenal. The helical transmembrane segment at 89 to 109 (EPFVILLILIANAVVGVWQER) threads the bilayer. At 110–252 (NAESAIEALK…EIKTPLQQKL (143 aa)) the chain is on the cytoplasmic side. The helical transmembrane segment at 253-272 (DEFGEQLSKVISLICVAVWA) threads the bilayer. The Lumenal segment spans residues 273-294 (INIGHFNDPAHGGSWIKGAVYY). The helical transmembrane segment at 295–312 (FKIAVALAVAAIPEGLPA) threads the bilayer. Val303, Ala304, Ile306, and Glu308 together coordinate Ca(2+). Residues 313-756 (VITTCLALGT…EEGRAIYNNM (444 aa)) are Cytoplasmic-facing. The 4-aspartylphosphate intermediate role is filled by Asp350. Mg(2+) is bound by residues Asp702 and Asp706. A helical membrane pass occupies residues 757-776 (KQFIRYLISSNIGEVVSIFL). The Ca(2+) site is built by Asn767 and Glu770. The Lumenal segment spans residues 777 to 786 (TAALGLPEAL). Residues 787-807 (IPVQLLWVNLVTDGLPATALG) traverse the membrane as a helical segment. The Ca(2+) site is built by Asn795, Thr798, and Asp799. The Cytoplasmic segment spans residues 808–827 (FNPPDLDIMTKPPRKADEGL). Residues 828-850 (ISGWLFFRYMAIGGYVGCATVGG) form a helical membrane-spanning segment. Residues 851 to 896 (AAWWFMFSETGPQLSYWQLTHHLSCLGGGEEFKGIDCKIFNDPHPM) are Lumenal-facing. The chain crosses the membrane as a helical span at residues 897–916 (TMALSVLVTIEMLNAMNSLS). Glu907 is a binding site for Ca(2+). The Cytoplasmic segment spans residues 917-929 (ENQSLVQMPPWCN). Residues 930-948 (IWLIASMCLSFALHFVILY) form a helical membrane-spanning segment. Over 949–963 (VDVLSTVFQVTPLDG) the chain is Lumenal. The chain crosses the membrane as a helical span at residues 964-984 (NEWMTVMKFSLPVVLLDEILK). Residues 985–1018 (FVARRISDGESYIKNMHGLVLAWAVFFAYIIWGP) are Cytoplasmic-facing.

Belongs to the cation transport ATPase (P-type) (TC 3.A.3) family.

Its subcellular location is the endoplasmic reticulum membrane. The protein resides in the sarcoplasmic reticulum membrane. It catalyses the reaction Ca(2+)(in) + ATP + H2O = Ca(2+)(out) + ADP + phosphate + H(+). Functionally, this magnesium-dependent enzyme catalyzes the hydrolysis of ATP coupled with the transport of calcium. The protein is Calcium-transporting ATPase sarcoplasmic/endoplasmic reticulum type of Anopheles gambiae (African malaria mosquito).